The following is a 474-amino-acid chain: Pyoverdine export outer membrane protein OpmQ (474 aa).

Positions 1-17 (MSMKNLSLISACLLLGA) are cleaved as a signal peptide. Cysteine 18 carries the N-palmitoyl cysteine lipid modification. Cysteine 18 carries S-diacylglycerol cysteine lipidation.

This sequence belongs to the outer membrane factor (OMF) (TC 1.B.17) family. Part of the tripartite efflux system PvdRT-OpmQ, which is composed of an inner membrane component with both ATPase and permease domains, PvdT, a periplasmic membrane fusion protein, PvdR, and an outer membrane component, OpmQ.

The protein resides in the cell outer membrane. In terms of biological role, part of the tripartite efflux system PvdRT-OpmQ required for the secretion into the extracellular milieu of the siderophore pyoverdine (PVD), which is involved in iron acquisition. The system is responsible for export of newly synthesized PVD after the final steps of biosynthesis have taken place in the periplasm. It is also responsible for recycling of PVD after internalization of ferri-PVD into the periplasm by the outer-membrane receptor FpvA and release of iron from PVD, thus making PVD available for new cycles of iron uptake. In addition, can expel unwanted metals complexed with PVD from the periplasm into the extracellular medium. The sequence is that of Pyoverdine export outer membrane protein OpmQ from Pseudomonas aeruginosa (strain ATCC 15692 / DSM 22644 / CIP 104116 / JCM 14847 / LMG 12228 / 1C / PRS 101 / PAO1).